The primary structure comprises 1232 residues: MAEAASGAGGTSLEGERGKRPPPEGEPAAPASGVLDKLFGKRLLQAGRYLVSHKAWMKTVPTENCDVLMTFPDTTDDHTLLWLLNHIRVGIPELIVQVRHHRHTRAYAFFVTATYESLLRGADELGLRKAVKAEFGGGTRGFSCEEDFIYENVESELRFFTSQERQSIIRFWLQNLRAKQGEALHNVRFLEDQPIIPELAARGIIQQVFPVHEQRILNRLMKSWVQAVCENQPLDDICDYFGVKIAMYFAWLGFYTSAMVYPAVFGSVLYTFTEADQTSRDVSCVVFALFNVIWSTLFLEEWKRRGAELAYKWGTLDSPGEAVEEPRPQFRGVRRISPITRAEEFYYPPWKRLLFQLLVSLPLCLACLVCVFLLMLGCFQLQELVLSVKGLPRLARFLPKVMLALLVSVSAEGYKKLAIWLNDMENYRLESAYEKHLIIKVVLFQFVNSYLSLFYIGFYLKDMERLKEMLATLLITRQFLQNVREVLQPHLYRRLGRGELGLRAVWELARALLGLLSLRRPAPRRLEPQADEGGGGGSGGGGRRCLSGGCGAPEEEEEAALVERRRAGEGGEEGDGPPGGKEEDEDDEEEEDEEEEEDEEEGEEGGLLDCGLRLKKVSFAERGAGRRRPGPSPEALLEEGSPTMVEKGLEPGVFTLAEEDDEAEGAPGSPEREPPAILFRRAGGEGRDQGPDGGPDPEPGSNSDSTRRQRRQNRSSWIDPPEEEHSPQLTQAELESCMKKYEDTFQDYQEMFVQFGYVVLFSSAFPLAALCALVNNLIEIRSDAFKLCTGLQRPFGQRVESIGQWQKVMEAMGVLAIVVNCYLIGQCGQLQRLFPWLSPEAAIVSVVVLEHFALLLKYLIHVAIPDIPGWVAEEMAKLEYQRREAFKRHERQAQHRYQQQQRRRREEEERQRHAEHHARREHDSGGREEARAEGSGLDPATSSEKASAKAKGSTAGGHGPERPKRPGSLLAPNNVMKLKQIIPLQGKFLSSGATSSLAAAGAGATTRPPPAQSPTGSDTRLPAFLSFKFLKSPETRRDSERSHSPPKAFHAGKLFPFGGTRAEPGSNGAGGQARPDGTPSSGSSRVQRSGPVDEALAEELEAPRPEEEGSGTALAPVGAPALRTRRSRSPAPPPPMPLPRPPTPPAGCWQWDGPWGCGGEGAAPRQALAAAECPPCAMAGPPPAPQPLPGDASFYSLPPPPLPPTSDPLETPAPSPSPSPSPQAVCWPSGWH.

A disordered region spans residues 1–32 (MAEAASGAGGTSLEGERGKRPPPEGEPAAPAS). Position 2 is an N-acetylalanine (Ala-2). The Extracellular portion of the chain corresponds to 2 to 244 (AEAASGAGGT…DDICDYFGVK (243 aa)). A compositionally biased stretch (basic and acidic residues) spans 14–23 (EGERGKRPPP). The helical transmembrane segment at 245 to 265 (IAMYFAWLGFYTSAMVYPAVF) threads the bilayer. Over 266–281 (GSVLYTFTEADQTSRD) the chain is Cytoplasmic. A helical membrane pass occupies residues 282–302 (VSCVVFALFNVIWSTLFLEEW). Over 303–356 (KRRGAELAYKWGTLDSPGEAVEEPRPQFRGVRRISPITRAEEFYYPPWKRLLFQ) the chain is Extracellular. Position 318 is a phosphoserine (Ser-318). A helical transmembrane segment spans residues 357-377 (LLVSLPLCLACLVCVFLLMLG). Topologically, residues 378–400 (CFQLQELVLSVKGLPRLARFLPK) are cytoplasmic. Residues 401 to 421 (VMLALLVSVSAEGYKKLAIWL) traverse the membrane as a helical segment. Over 422-437 (NDMENYRLESAYEKHL) the chain is Extracellular. Residues 438–458 (IIKVVLFQFVNSYLSLFYIGF) form a helical membrane-spanning segment. The Cytoplasmic segment spans residues 459-750 (YLKDMERLKE…YEDTFQDYQE (292 aa)). Residues 524–650 (RRLEPQADEG…SPTMVEKGLE (127 aa)) are disordered. Residues 532-551 (EGGGGGSGGGGRRCLSGGCG) show a composition bias toward gly residues. Residues 582-606 (EEDEDDEEEEDEEEEEDEEEGEEGG) show a composition bias toward acidic residues. Ser-669 carries the post-translational modification Phosphoserine. Positions 681 to 728 (RAGGEGRDQGPDGGPDPEPGSNSDSTRRQRRQNRSSWIDPPEEEHSPQ) are disordered. The helical transmembrane segment at 751-771 (MFVQFGYVVLFSSAFPLAALC) threads the bilayer. Topologically, residues 772–807 (ALVNNLIEIRSDAFKLCTGLQRPFGQRVESIGQWQK) are extracellular. Phosphoserine; by FAM20C is present on Ser-801. A helical membrane pass occupies residues 808 to 828 (VMEAMGVLAIVVNCYLIGQCG). Residues 829 to 841 (QLQRLFPWLSPEA) are Cytoplasmic-facing. The chain crosses the membrane as a helical span at residues 842 to 862 (AIVSVVVLEHFALLLKYLIHV). At 863–1232 (AIPDIPGWVA…QAVCWPSGWH (370 aa)) the chain is on the extracellular side. Disordered regions lie at residues 888–970 (RHER…GSLL), 997–1152 (LAAA…WQWD), and 1174–1232 (PPCA…SGWH). Residues 904–932 (RREEEERQRHAEHHARREHDSGGREEARA) are compositionally biased toward basic and acidic residues. 2 stretches are compositionally biased toward low complexity: residues 933-953 (EGSG…AKGS) and 997-1006 (LAAAGAGATT). Arg-1020 carries the asymmetric dimethylarginine; alternate modification. Residue Arg-1020 is modified to Omega-N-methylarginine; alternate. The span at 1031–1043 (KSPETRRDSERSH) shows a compositional bias: basic and acidic residues. Residues 1078-1087 (TPSSGSSRVQ) are compositionally biased toward polar residues. Composition is skewed to pro residues over residues 1130–1145 (PAPP…PTPP) and 1197–1221 (LPPP…PSPS).

The protein belongs to the anoctamin family. Expressed in embryonic stem cells, fetal brain and neural tissues.

It localises to the cell membrane. Does not exhibit calcium-activated chloride channel (CaCC) activity. The chain is Anoctamin-8 (ANO8) from Homo sapiens (Human).